A 242-amino-acid chain; its full sequence is GDSL esterase/lipase At5g62930 (242 aa).

Ser-11 serves as the catalytic Nucleophile. The segment at 223–242 (PHHSHIDGKNPSKAFEERCL) is disordered.

Belongs to the 'GDSL' lipolytic enzyme family.

The polypeptide is GDSL esterase/lipase At5g62930 (Arabidopsis thaliana (Mouse-ear cress)).